A 309-amino-acid polypeptide reads, in one-letter code: tRNA pseudouridine synthase B (309 aa).

The Nucleophile role is filled by D39.

Belongs to the pseudouridine synthase TruB family. Type 1 subfamily.

It carries out the reaction uridine(55) in tRNA = pseudouridine(55) in tRNA. In terms of biological role, responsible for synthesis of pseudouridine from uracil-55 in the psi GC loop of transfer RNAs. In Bacillus subtilis (strain 168), this protein is tRNA pseudouridine synthase B.